A 642-amino-acid chain; its full sequence is Threonine--tRNA ligase (642 aa).

A TGS domain is found at 1–61 (MPIITLPDGS…EQDSQLAIIT (61 aa)). The tract at residues 243–534 (DHRKIGKQLD…LTEEYAGFFP (292 aa)) is catalytic. Zn(2+) contacts are provided by C334, H385, and H511.

This sequence belongs to the class-II aminoacyl-tRNA synthetase family. Homodimer. Zn(2+) is required as a cofactor.

The protein resides in the cytoplasm. The enzyme catalyses tRNA(Thr) + L-threonine + ATP = L-threonyl-tRNA(Thr) + AMP + diphosphate + H(+). Catalyzes the attachment of threonine to tRNA(Thr) in a two-step reaction: L-threonine is first activated by ATP to form Thr-AMP and then transferred to the acceptor end of tRNA(Thr). Also edits incorrectly charged L-seryl-tRNA(Thr). In Proteus mirabilis (strain HI4320), this protein is Threonine--tRNA ligase.